A 211-amino-acid chain; its full sequence is MKKVKIALTKGRLEKKAIEIFKAININTRELEDKGRKLIFNCENEEYNIELFLVKAKDVETYVEYGAADIGIVGKDTLMETDKEFYEVLDLNMGKCKFAVAALPSFKLDQGYNRKKIATKYPNIAREYFRKKCMDVELIKIEGSVELGPIVGLADAIVDIVETGNTLRENGLAVVEDICEISARMIVNKASMKTKKDEVIKIVENISEVIR.

It belongs to the ATP phosphoribosyltransferase family. Short subfamily. As to quaternary structure, heteromultimer composed of HisG and HisZ subunits.

The protein resides in the cytoplasm. It catalyses the reaction 1-(5-phospho-beta-D-ribosyl)-ATP + diphosphate = 5-phospho-alpha-D-ribose 1-diphosphate + ATP. It functions in the pathway amino-acid biosynthesis; L-histidine biosynthesis; L-histidine from 5-phospho-alpha-D-ribose 1-diphosphate: step 1/9. Functionally, catalyzes the condensation of ATP and 5-phosphoribose 1-diphosphate to form N'-(5'-phosphoribosyl)-ATP (PR-ATP). Has a crucial role in the pathway because the rate of histidine biosynthesis seems to be controlled primarily by regulation of HisG enzymatic activity. This chain is ATP phosphoribosyltransferase, found in Clostridium botulinum (strain 657 / Type Ba4).